The chain runs to 744 residues: Deleted in azoospermia protein 1 (744 aa).

Residues 1 to 10 (MSAANPETPN) are compositionally biased toward polar residues. Residues 1–27 (MSAANPETPNSTISREASTQSSSAAAS) are disordered. The span at 11-27 (STISREASTQSSSAAAS) shows a compositional bias: low complexity. The 76-residue stretch at 40-115 (NTVFVGGIDA…KKLKLGPAIR (76 aa)) folds into the RRM 1 domain. The segment covering 163-175 (QHVQSAANPETPN) has biased composition (polar residues). The disordered stretch occupies residues 163–192 (QHVQSAANPETPNSTISREASTQSSSAAAS). Over residues 176-192 (STISREASTQSSSAAAS) the composition is skewed to low complexity. In terms of domain architecture, RRM 2 spans 205–280 (NTVFVGGIDA…KKLKLGPAIR (76 aa)). Residues 328–340 (QHVQSAANPETPN) are compositionally biased toward polar residues. The interval 328–357 (QHVQSAANPETPNSTISREASTQSSSAAAS) is disordered. Residues 341-357 (STISREASTQSSSAAAS) show a composition bias toward low complexity. The RRM 3 domain maps to 370 to 445 (NTVFVGGIDA…KKLKLGPAIR (76 aa)). 9 DAZ domains span residues 497 to 520 (AYSA…YNYQ), 521 to 544 (EYPT…YNYQ), 545 to 568 (PFPA…YNYQ), 569 to 592 (AFPA…YNYQ), 593 to 616 (PFPA…YNYQ), 617 to 640 (AFPA…YNYQ), 641 to 664 (AFPA…YNYQ), 665 to 688 (AFPA…YNYQ), and 689 to 712 (AFPA…YNYQ).

The protein belongs to the RRM DAZ family. In terms of assembly, forms a heterodimer with BOLL and DAZL. Interacts with PUM2, DAZAP1, DAZAP2, DZIP1 and DZIP3. As to expression, testis-specific. Expression restricted to premeiotic germ cells, particularly in spermatogonia (at protein level).

Its subcellular location is the cytoplasm. The protein resides in the nucleus. Its function is as follows. RNA-binding protein that plays an essential role in spermatogenesis. May act by binding to the 3'-UTR of mRNAs and regulating their translation. Promotes germ-cell progression to meiosis and formation of haploid germ cells. The chain is Deleted in azoospermia protein 1 (DAZ1) from Homo sapiens (Human).